The sequence spans 246 residues: NAD(P)H-quinone oxidoreductase subunit K, organellar chromatophore (246 aa).

Cys-58, Cys-59, Cys-123, and Cys-154 together coordinate [4Fe-4S] cluster.

It belongs to the complex I 20 kDa subunit family. In terms of assembly, NDH-1 is composed of 14 different subunits. Subunits nuoB, C, D, E, F, and G constitute the peripheral sector of the complex. Requires [4Fe-4S] cluster as cofactor.

It is found in the plastid. The protein resides in the organellar chromatophore thylakoid membrane. The catalysed reaction is a quinone + NADH + H(+) = a quinol + NAD(+). NDH-1 shuttles electrons from NADH, via FMN and iron-sulfur (Fe-S) centers, to quinones in the respiratory chain. Couples the redox reaction to proton translocation (for every two electrons transferred, four hydrogen ions are translocated across the cytoplasmic membrane), and thus conserves the redox energy in a proton gradient. This chain is NAD(P)H-quinone oxidoreductase subunit K, organellar chromatophore, found in Paulinella chromatophora.